Consider the following 465-residue polypeptide: Probable tRNA modification GTPase MnmE (465 aa).

The (6S)-5-formyl-5,6,7,8-tetrahydrofolate site is built by R23, E85, and R124. Residues 221-384 (GTKVCIIGKP…LNNCILDLSS (164 aa)) enclose the TrmE-type G domain. GTP contacts are provided by residues 231–236 (NVGKSS), 250–256 (TNFPGTT), and 275–278 (DTAG). 2 residues coordinate Mg(2+): S235 and T256. A (6S)-5-formyl-5,6,7,8-tetrahydrofolate-binding site is contributed by K465.

This sequence belongs to the TRAFAC class TrmE-Era-EngA-EngB-Septin-like GTPase superfamily. TrmE GTPase family. K(+) is required as a cofactor.

It localises to the plastid. The protein resides in the chloroplast. In terms of biological role, exhibits a very high intrinsic GTPase hydrolysis rate. Involved in the addition of a carboxymethylaminomethyl (cmnm) group at the wobble position (U34) of certain tRNAs, forming tRNA-cmnm(5)s(2)U34. The protein is Probable tRNA modification GTPase MnmE of Cyanidium caldarium (Red alga).